The chain runs to 549 residues: Glucose-6-phosphate isomerase (549 aa).

Glutamate 353 serves as the catalytic Proton donor. Catalysis depends on residues histidine 384 and lysine 513.

It belongs to the GPI family.

The protein localises to the cytoplasm. The catalysed reaction is alpha-D-glucose 6-phosphate = beta-D-fructose 6-phosphate. The protein operates within carbohydrate biosynthesis; gluconeogenesis. Its pathway is carbohydrate degradation; glycolysis; D-glyceraldehyde 3-phosphate and glycerone phosphate from D-glucose: step 2/4. In terms of biological role, catalyzes the reversible isomerization of glucose-6-phosphate to fructose-6-phosphate. The chain is Glucose-6-phosphate isomerase from Brucella suis (strain ATCC 23445 / NCTC 10510).